A 57-amino-acid chain; its full sequence is Large ribosomal subunit protein bL33 (57 aa).

Belongs to the bacterial ribosomal protein bL33 family.

This Shewanella denitrificans (strain OS217 / ATCC BAA-1090 / DSM 15013) protein is Large ribosomal subunit protein bL33.